Here is a 144-residue protein sequence, read N- to C-terminus: Bacilliredoxin BC_2157 (144 aa).

It belongs to the bacilliredoxin family.

The protein is Bacilliredoxin BC_2157 of Bacillus cereus (strain ATCC 14579 / DSM 31 / CCUG 7414 / JCM 2152 / NBRC 15305 / NCIMB 9373 / NCTC 2599 / NRRL B-3711).